A 533-amino-acid polypeptide reads, in one-letter code: Methyl-accepting chemotaxis protein IV (533 aa).

Residues 1–6 (MFNRIR) lie on the Cytoplasmic side of the membrane. A helical transmembrane segment spans residues 7–33 (ISTTLFLILILCGILQIGSNGMSFWAF). Over 34–188 (RDDLQRLNQV…AQSQRNYQIS (155 aa)) the chain is Periplasmic. Residues 189 to 209 (ALVFISMIIVAAIYISSALWW) form a helical membrane-spanning segment. The Cytoplasmic segment spans residues 210-533 (TRKMIVQPLA…VQLQIAPVVS (324 aa)). One can recognise an HAMP domain in the interval 212–264 (KMIVQPLAIIGSHFDSIAAGNLARPIAVYGRNEITAIFASLKTMQQALRGTVS). In terms of domain architecture, Methyl-accepting transducer spans 269–498 (GSQEMHIGIA…EAAVATEQLA (230 aa)). Glutamate methyl ester (Gln) occurs at positions 293, 300, and 307. Glu-489 carries the post-translational modification Glutamate methyl ester (Glu).

It belongs to the methyl-accepting chemotaxis (MCP) protein family.

It is found in the cell inner membrane. Mediates taxis toward dipeptides via an interaction with the periplasmic dipeptide-binding protein. Its function is as follows. Chemotactic-signal transducers respond to changes in the concentration of attractants and repellents in the environment, transduce a signal from the outside to the inside of the cell, and facilitate sensory adaptation through the variation of the level of methylation. Attractants increase the level of methylation while repellents decrease the level of methylation, the methyl groups are added by the methyltransferase CheR and removed by the methylesterase CheB. This Escherichia coli (strain K12) protein is Methyl-accepting chemotaxis protein IV (tap).